A 326-amino-acid polypeptide reads, in one-letter code: Lipid droplet-associated hydrolase (326 aa).

Residue S140 is the Nucleophile of the active site. Catalysis depends on charge relay system residues D272 and H301.

Belongs to the AB hydrolase superfamily. LDAH family. In terms of tissue distribution, expressed in liver, adrenal gland, prostate, spleen, kidney, brown and white adipose tissue, testis and to a lesser extent in brain (at protein level). Expressed in peritoneal macrophages and bone marrow-derived macrophages (at protein level). Highly expressed in macrophage and foam cell-rich areas in atherosclerotic lesions (at protein level). mRNA, but no protein, expressed in heart and muscle.

It localises to the lipid droplet. The protein resides in the endoplasmic reticulum. It carries out the reaction a cholesterol ester + H2O = cholesterol + a fatty acid + H(+). Probable serine lipid hydrolase associated with lipid droplets. Has low cholesterol esterase activity. Appears to lack triglyceride lipase activity. Involved in cholesterol and triglyceride homeostasis; stimulates cellular triglyceride accumulation and cellular cholesterol release. Acts antagonistically with PNPLA2/ATGL in regulation of cellular lipid stores. May regulate triglyceride accumulation indirectly through stimulation of PNPLA2/ATGL ubiquitination and proteasomal degradation. Promotes microtubule-dependent lipid droplet fusion. Highly expressed in macrophage-rich areas in atherosclerotic lesions, suggesting that it could promote cholesterol ester turnover in macrophages. In terms of biological role, stimulates cellular triglyceride accumulation and lipid droplet fusion. Functionally, associates with lipid droplets but does not stimulate cellular triglyceride accumulation, lipid droplet fusion or ATGL proteasomal degradation. The polypeptide is Lipid droplet-associated hydrolase (Mus musculus (Mouse)).